A 159-amino-acid polypeptide reads, in one-letter code: Large ribosomal subunit protein uL10 (159 aa).

Belongs to the universal ribosomal protein uL10 family. As to quaternary structure, part of the ribosomal stalk of the 50S ribosomal subunit. The N-terminus interacts with L11 and the large rRNA to form the base of the stalk. The C-terminus forms an elongated spine to which L12 dimers bind in a sequential fashion forming a multimeric L10(L12)X complex.

In terms of biological role, forms part of the ribosomal stalk, playing a central role in the interaction of the ribosome with GTP-bound translation factors. This is Large ribosomal subunit protein uL10 from Campylobacter jejuni (strain RM1221).